The sequence spans 145 residues: Superoxide dismutase [Mn/Fe] (145 aa).

Fe(3+) contacts are provided by His-10 and His-64. 2 residues coordinate Mn(2+): His-10 and His-64.

It belongs to the iron/manganese superoxide dismutase family. Mn(2+) is required as a cofactor. Requires Fe(3+) as cofactor.

It carries out the reaction 2 superoxide + 2 H(+) = H2O2 + O2. Destroys superoxide anion radicals which are normally produced within the cells and which are toxic to biological systems. Catalyzes the dismutation of superoxide anion radicals into O2 and H2O2 by successive reduction and oxidation of the transition metal ion at the active site. The chain is Superoxide dismutase [Mn/Fe] (sodA) from Streptococcus alactolyticus.